We begin with the raw amino-acid sequence, 309 residues long: tRNA pseudouridine synthase B (309 aa).

The Nucleophile role is filled by D39. Positions 229-306 (LPRVVVHQES…ERVLTLRKVF (78 aa)) constitute a PUA domain.

This sequence belongs to the pseudouridine synthase TruB family. Type 1 subfamily.

The enzyme catalyses uridine(55) in tRNA = pseudouridine(55) in tRNA. Functionally, responsible for synthesis of pseudouridine from uracil-55 in the psi GC loop of transfer RNAs. This chain is tRNA pseudouridine synthase B, found in Thermotoga maritima (strain ATCC 43589 / DSM 3109 / JCM 10099 / NBRC 100826 / MSB8).